The sequence spans 346 residues: Melanoma-associated antigen B3 (346 aa).

Residues 1 to 35 form a disordered region; that stretch reads MPRGQKSTLHAREKRQQTRGQTQDHQGAQITATNK. Polar residues predominate over residues 18–33; the sequence is TRGQTQDHQGAQITAT. Positions 111–310 constitute an MAGE domain; the sequence is LIMKTNMLVQ…SAFQFWYEEA (200 aa).

In terms of tissue distribution, expressed in testis.

The sequence is that of Melanoma-associated antigen B3 (MAGEB3) from Homo sapiens (Human).